The following is a 127-amino-acid chain: Small ribosomal subunit protein uS13 (127 aa).

The disordered stretch occupies residues 90–127 (RRHRQGLPVRGQRTRTNARTRRGRRLTVAGKKKTPAKK). Positions 101–127 (QRTRTNARTRRGRRLTVAGKKKTPAKK) are enriched in basic residues.

This sequence belongs to the universal ribosomal protein uS13 family. In terms of assembly, part of the 30S ribosomal subunit. Forms a loose heterodimer with protein S19. Forms two bridges to the 50S subunit in the 70S ribosome.

Its function is as follows. Located at the top of the head of the 30S subunit, it contacts several helices of the 16S rRNA. In the 70S ribosome it contacts the 23S rRNA (bridge B1a) and protein L5 of the 50S subunit (bridge B1b), connecting the 2 subunits; these bridges are implicated in subunit movement. Contacts the tRNAs in the A and P-sites. The polypeptide is Small ribosomal subunit protein uS13 (Synechocystis sp. (strain ATCC 27184 / PCC 6803 / Kazusa)).